Consider the following 40-residue polypeptide: Thioredoxin (40 aa).

C29 and C32 are joined by a disulfide.

The protein belongs to the thioredoxin family.

In terms of biological role, participates in various redox reactions through the reversible oxidation of its active center dithiol to a disulfide and catalyzes dithiol-disulfide exchange reactions. This chain is Thioredoxin (trxA), found in Clostridium sporogenes.